We begin with the raw amino-acid sequence, 189 residues long: Putative ankyrin repeat protein L38 (189 aa).

One copy of the ANK repeat lies at Y108–K137.

The protein is Putative ankyrin repeat protein L38 of Acanthamoeba polyphaga mimivirus (APMV).